The chain runs to 183 residues: ATP-dependent protease subunit HslV (183 aa).

The active site involves Thr-2. Na(+) contacts are provided by Ala-157, Cys-160, and Thr-163.

This sequence belongs to the peptidase T1B family. HslV subfamily. As to quaternary structure, a double ring-shaped homohexamer of HslV is capped on each side by a ring-shaped HslU homohexamer. The assembly of the HslU/HslV complex is dependent on binding of ATP.

Its subcellular location is the cytoplasm. It carries out the reaction ATP-dependent cleavage of peptide bonds with broad specificity.. Allosterically activated by HslU binding. Protease subunit of a proteasome-like degradation complex believed to be a general protein degrading machinery. The polypeptide is ATP-dependent protease subunit HslV (Marinomonas sp. (strain MWYL1)).